Consider the following 242-residue polypeptide: Type III pantothenate kinase (242 aa).

Residue aspartate 7–lysine 14 participates in ATP binding. Substrate is bound by residues tyrosine 91 and glycine 98–arginine 101. Aspartate 100 functions as the Proton acceptor in the catalytic mechanism. Threonine 121 contacts ATP. Threonine 171 serves as a coordination point for substrate.

This sequence belongs to the type III pantothenate kinase family. Homodimer. NH4(+) serves as cofactor. The cofactor is K(+).

The protein localises to the cytoplasm. It catalyses the reaction (R)-pantothenate + ATP = (R)-4'-phosphopantothenate + ADP + H(+). It functions in the pathway cofactor biosynthesis; coenzyme A biosynthesis; CoA from (R)-pantothenate: step 1/5. Functionally, catalyzes the phosphorylation of pantothenate (Pan), the first step in CoA biosynthesis. In Xanthomonas axonopodis pv. citri (strain 306), this protein is Type III pantothenate kinase.